Consider the following 108-residue polypeptide: Tubulin-specific chaperone A (108 aa).

Residue Ala2 is modified to N-acetylalanine.

Belongs to the TBCA family. In terms of assembly, supercomplex made of cofactors A to E. Cofactors A and D function by capturing and stabilizing tubulin in a quasi-native conformation. Cofactor E binds to the cofactor D-tubulin complex; interaction with cofactor C then causes the release of tubulin polypeptides that are committed to the native state. In terms of tissue distribution, widely expressed, but is most abundant in the testis.

Its subcellular location is the cytoplasm. It is found in the cytoskeleton. Tubulin-folding protein; involved in the early step of the tubulin folding pathway. This Mus musculus (Mouse) protein is Tubulin-specific chaperone A (Tbca).